The chain runs to 428 residues: MDEFKPEDELKPDPSDRRTGRSRQSSERSERTERGEPQINFDDIELDDTDDRRPTRAQKERNEEPEIEEEIDESEDETVDEERVERRPRKRKKAASKPASRQYMMMGVGILVLLLLIIGIGSALKAPSTTSSDQTASGEKSIDLAGNATDQANGVQPAPGTTSAENTQQDVSLPPISSTPTQGQTPVATDGQQRVEVQGDLNNALTQPQNQQQLNNVAVNSTLPTEPATVAPVRNGNASRDTAKTQTAERPSTTRPARQQAVIEPKKPQATVKTEPKPVAQTPKRTEPAAPVASTKAPAATSTPAPKETATTAPVQTASPAQTTATPAAGAKTAGNVGSLKSAPSSHYTLQLSSSSNYDNLNGWAKKENLKNYVVYETTRNGQPWYVLVSGVYASKEEAKKAVSTLPADVQAKNPWAKPLRQVQADLK.

Residues 1 to 99 (MDEFKPEDEL…KRKKAASKPA (99 aa)) are disordered. Residues 1 to 103 (MDEFKPEDEL…AASKPASRQY (103 aa)) are Cytoplasmic-facing. Composition is skewed to basic and acidic residues over residues 7-36 (EDEL…ERGE) and 50-64 (DDRR…RNEE). The stretch at 55–87 (TRAQKERNEEPEIEEEIDESEDETVDEERVERR) forms a coiled coil. The span at 65-82 (PEIEEEIDESEDETVDEE) shows a compositional bias: acidic residues. Residues 86-95 (RRPRKRKKAA) are compositionally biased toward basic residues. The helical transmembrane segment at 104–124 (MMMGVGILVLLLLIIGIGSAL) threads the bilayer. Residues 125–428 (KAPSTTSSDQ…PLRQVQADLK (304 aa)) are Periplasmic-facing. Disordered regions lie at residues 149-190 (TDQA…VATD) and 226-344 (EPAT…KSAP). A compositionally biased stretch (polar residues) spans 236-257 (GNASRDTAKTQTAERPSTTRPA). A compositionally biased stretch (low complexity) spans 288–334 (PAAPVASTKAPAATSTPAPKETATTAPVQTASPAQTTATPAAGAKTA). In terms of domain architecture, SPOR spans 342 to 419 (SAPSSHYTLQ…VQAKNPWAKP (78 aa)).

The protein belongs to the DamX family. In terms of assembly, interacts in vitro with multiple Fts proteins, including FtsQ and FtsN.

The protein resides in the cell inner membrane. Non-essential cell division protein. The polypeptide is Cell division protein DamX (Escherichia coli (strain K12)).